A 304-amino-acid chain; its full sequence is N-acetylmuramic acid 6-phosphate etherase (304 aa).

Serine 2 bears the Phosphoserine mark. Residues alanine 59–lysine 222 form the SIS domain. Glutamate 87 (proton donor) is an active-site residue. Residue glutamate 118 is part of the active site.

It belongs to the GCKR-like family. MurNAc-6-P etherase subfamily. As to quaternary structure, homodimer.

It carries out the reaction N-acetyl-D-muramate 6-phosphate + H2O = N-acetyl-D-glucosamine 6-phosphate + (R)-lactate. The protein operates within amino-sugar metabolism; N-acetylmuramate degradation. Specifically catalyzes the cleavage of the D-lactyl ether substituent of MurNAc 6-phosphate, producing GlcNAc 6-phosphate and D-lactate. The protein is N-acetylmuramic acid 6-phosphate etherase of Bacillus subtilis (strain 168).